The chain runs to 291 residues: Oxidative stress-responsive serine-rich protein 1 (291 aa).

Residues 29–139 (ISLSVGEGPS…NAGENSTSLD (111 aa)) form a disordered region. Over residues 65–83 (STRKSSRGAVRTQRRRRSK) the composition is skewed to basic residues. The span at 95–105 (CSTTAPPSSSQ) shows a compositional bias: polar residues. At Thr143 the chain carries Phosphothreonine.

This chain is Oxidative stress-responsive serine-rich protein 1 (Oser1), found in Mus musculus (Mouse).